A 418-amino-acid polypeptide reads, in one-letter code: UPF0261 protein BRA1168/BS1330_II1159 (418 aa).

This sequence belongs to the UPF0261 family.

This Brucella suis biovar 1 (strain 1330) protein is UPF0261 protein BRA1168/BS1330_II1159.